Here is a 100-residue protein sequence, read N- to C-terminus: Osteocalcin (100 aa).

Positions 1–23 are cleaved as a signal peptide; the sequence is MRALTLLALLALATLCITGQAGA. Residues 24–51 constitute a propeptide that is removed on maturation; it reads KPSGAESSKGAAFVSKQEGSEVVKRPRR. The Gla domain occupies 52–98; that stretch reads YLYQWLGAPAPYPDPLEPKREVCELNPDCDELADHIGFQEAYRRFYG. Pro60 is modified (4-hydroxyproline). Ca(2+) contacts are provided by Glu68, Glu72, Glu75, and Asp81. Residues Glu68, Glu72, and Glu75 each carry the 4-carboxyglutamate modification. Cys74 and Cys80 are joined by a disulfide.

This sequence belongs to the osteocalcin/matrix Gla protein family. Gamma-carboxyglutamate residues are formed by vitamin K dependent carboxylation by GGCX. These residues are essential for the binding of calcium. Decarboxylation promotes the hormone activity.

Its subcellular location is the secreted. Its function is as follows. The carboxylated form is one of the main organic components of the bone matrix, which constitutes 1-2% of the total bone protein: it acts as a negative regulator of bone formation and is required to limit bone formation without impairing bone resorption or mineralization. The carboxylated form binds strongly to apatite and calcium. The uncarboxylated form acts as a hormone secreted by osteoblasts, which regulates different cellular processes, such as energy metabolism, male fertility and brain development. Regulates of energy metabolism by acting as a hormone favoring pancreatic beta-cell proliferation, insulin secretion and sensitivity and energy expenditure. Uncarboxylated osteocalcin hormone also promotes testosterone production in the testes: acts as a ligand for G protein-coupled receptor GPRC6A at the surface of Leydig cells, initiating a signaling response that promotes the expression of enzymes required for testosterone synthesis in a CREB-dependent manner. Also acts as a regulator of brain development: osteocalcin hormone crosses the blood-brain barrier and acts as a ligand for GPR158 on neurons, initiating a signaling response that prevents neuronal apoptosis in the hippocampus, favors the synthesis of all monoamine neurotransmitters and inhibits that of gamma-aminobutyric acid (GABA). Osteocalcin also crosses the placenta during pregnancy and maternal osteocalcin is required for fetal brain development. In Macaca mulatta (Rhesus macaque), this protein is Osteocalcin (BGLAP).